The chain runs to 348 residues: ECA polysaccharide chain length modulation protein (348 aa).

The next 2 helical transmembrane spans lie at 31–51 (FWII…TFFA) and 323–343 (AFLM…VALT).

This sequence belongs to the WzzB/Cld/Rol family. Probably part of a complex composed of WzxE, WzyE and WzzE.

It is found in the cell inner membrane. The protein operates within bacterial outer membrane biogenesis; enterobacterial common antigen biosynthesis. Functionally, modulates the polysaccharide chain length of enterobacterial common antigen (ECA). In Salmonella typhimurium (strain LT2 / SGSC1412 / ATCC 700720), this protein is ECA polysaccharide chain length modulation protein.